Reading from the N-terminus, the 150-residue chain is Calmodulin (150 aa).

4 EF-hand domains span residues 9 to 44, 45 to 80, 82 to 117, and 118 to 150; these read EQIAEFREAFSLFDRDQDGNITSNELGVVMRSLGQS, PTAAELQDMINEVDADGNGTIDFTEFLTMMARKMKD, DNEEEVREAFKVFDKDGNGYITVEELTHVLTSLGER, and LSQEEVADMIREADTDGDGVINYEEFSRVISSK. Positions 22, 24, 26, 28, 33, 58, 60, 62, 64, 69, 95, 97, 99, 101, 106, 131, 133, 135, and 142 each coordinate Ca(2+).

It belongs to the calmodulin family. As to quaternary structure, interacts with rng2.

It localises to the cytoplasm. Its subcellular location is the cytoskeleton. The protein localises to the microtubule organizing center. It is found in the spindle pole body. Functionally, calmodulin mediates the control of a large number of enzymes, ion channels and other proteins by Ca(2+). Among the enzymes to be stimulated by the calmodulin-Ca(2+) complex are a number of protein kinases and phosphatases. The protein is Calmodulin (cam1) of Schizosaccharomyces pombe (strain 972 / ATCC 24843) (Fission yeast).